The following is a 20-amino-acid chain: MKLSILGARVIDPASGLXXV.

This sequence belongs to the metallo-dependent hydrolases superfamily. DHOase family. PyrC' subfamily. In terms of assembly, heterododecamer of 6 active PyrB subunits and 6 non-catalytic PyrC' subunits.

Non-functional DHOase. The chain is Dihydroorotase-like protein (pyrC') from Pseudomonas fluorescens biotype A.